The sequence spans 418 residues: UDP-N-acetylglucosamine 1-carboxyvinyltransferase (418 aa).

22-23 (KN) is a binding site for phosphoenolpyruvate. Residue Arg-93 participates in UDP-N-acetyl-alpha-D-glucosamine binding. Catalysis depends on Cys-117, which acts as the Proton donor. Residue Cys-117 is modified to 2-(S-cysteinyl)pyruvic acid O-phosphothioketal. UDP-N-acetyl-alpha-D-glucosamine contacts are provided by residues 122-126 (RPIDL), Asp-306, and Leu-328.

The protein belongs to the EPSP synthase family. MurA subfamily.

The protein localises to the cytoplasm. The enzyme catalyses phosphoenolpyruvate + UDP-N-acetyl-alpha-D-glucosamine = UDP-N-acetyl-3-O-(1-carboxyvinyl)-alpha-D-glucosamine + phosphate. Its pathway is cell wall biogenesis; peptidoglycan biosynthesis. Its function is as follows. Cell wall formation. Adds enolpyruvyl to UDP-N-acetylglucosamine. In Campylobacter hominis (strain ATCC BAA-381 / DSM 21671 / CCUG 45161 / LMG 19568 / NCTC 13146 / CH001A), this protein is UDP-N-acetylglucosamine 1-carboxyvinyltransferase.